We begin with the raw amino-acid sequence, 142 residues long: Large ribosomal subunit protein uL13 (142 aa).

This sequence belongs to the universal ribosomal protein uL13 family. As to quaternary structure, part of the 50S ribosomal subunit.

In terms of biological role, this protein is one of the early assembly proteins of the 50S ribosomal subunit, although it is not seen to bind rRNA by itself. It is important during the early stages of 50S assembly. The sequence is that of Large ribosomal subunit protein uL13 from Desulfotalea psychrophila (strain LSv54 / DSM 12343).